The primary structure comprises 230 residues: Large ribosomal subunit protein uL1 (230 aa).

The protein belongs to the universal ribosomal protein uL1 family. Part of the 50S ribosomal subunit.

In terms of biological role, binds directly to 23S rRNA. The L1 stalk is quite mobile in the ribosome, and is involved in E site tRNA release. Functionally, protein L1 is also a translational repressor protein, it controls the translation of the L11 operon by binding to its mRNA. This chain is Large ribosomal subunit protein uL1, found in Leuconostoc citreum (strain KM20).